The chain runs to 383 residues: Succinyl-diaminopimelate desuccinylase (383 aa).

His73 contributes to the Zn(2+) binding site. Asp75 is an active-site residue. Asp107 is a binding site for Zn(2+). The active-site Proton acceptor is Glu141. Residues Glu142, Glu170, and His356 each contribute to the Zn(2+) site.

The protein belongs to the peptidase M20A family. DapE subfamily. Homodimer. The cofactor is Zn(2+). Co(2+) serves as cofactor.

The enzyme catalyses N-succinyl-(2S,6S)-2,6-diaminopimelate + H2O = (2S,6S)-2,6-diaminopimelate + succinate. It functions in the pathway amino-acid biosynthesis; L-lysine biosynthesis via DAP pathway; LL-2,6-diaminopimelate from (S)-tetrahydrodipicolinate (succinylase route): step 3/3. Functionally, catalyzes the hydrolysis of N-succinyl-L,L-diaminopimelic acid (SDAP), forming succinate and LL-2,6-diaminopimelate (DAP), an intermediate involved in the bacterial biosynthesis of lysine and meso-diaminopimelic acid, an essential component of bacterial cell walls. The sequence is that of Succinyl-diaminopimelate desuccinylase from Pseudomonas entomophila (strain L48).